A 451-amino-acid chain; its full sequence is Phosphoglucosamine mutase (451 aa).

Catalysis depends on Ser101, which acts as the Phosphoserine intermediate. 4 residues coordinate Mg(2+): Ser101, Asp240, Asp242, and Asp244. Position 101 is a phosphoserine (Ser101).

The protein belongs to the phosphohexose mutase family. Mg(2+) serves as cofactor. Post-translationally, activated by phosphorylation.

It carries out the reaction alpha-D-glucosamine 1-phosphate = D-glucosamine 6-phosphate. In terms of biological role, catalyzes the conversion of glucosamine-6-phosphate to glucosamine-1-phosphate. The protein is Phosphoglucosamine mutase of Thioalkalivibrio sulfidiphilus (strain HL-EbGR7).